Consider the following 162-residue polypeptide: Glycine cleavage system H protein, mitochondrial (162 aa).

The transit peptide at 1 to 31 directs the protein to the mitochondrion; the sequence is MALRIWASSTANALRLSSATRPHFSPLSRCF. Residues 53 to 135 enclose the Lipoyl-binding domain; it reads VATIGITDHA…YEDGWMIKVK (83 aa). Lys-94 bears the N6-lipoyllysine mark.

This sequence belongs to the GcvH family. In terms of assembly, the glycine cleavage system is composed of four proteins: P, T, L and H. (R)-lipoate is required as a cofactor.

It is found in the mitochondrion. Its function is as follows. The glycine cleavage system catalyzes the degradation of glycine. The H protein shuttles the methylamine group of glycine from the P protein to the T protein. The chain is Glycine cleavage system H protein, mitochondrial (GDCSH) from Flaveria pringlei.